The chain runs to 157 residues: Phosphopantetheine adenylyltransferase (157 aa).

Threonine 8 contributes to the substrate binding site. ATP contacts are provided by residues 8 to 9 (TF) and histidine 16. 3 residues coordinate substrate: lysine 40, threonine 72, and arginine 86. Residues 87 to 89 (GLR), glutamate 97, and 122 to 128 (YSFLSSS) each bind ATP.

This sequence belongs to the bacterial CoaD family. In terms of assembly, homohexamer. Mg(2+) serves as cofactor.

It is found in the cytoplasm. It catalyses the reaction (R)-4'-phosphopantetheine + ATP + H(+) = 3'-dephospho-CoA + diphosphate. It functions in the pathway cofactor biosynthesis; coenzyme A biosynthesis; CoA from (R)-pantothenate: step 4/5. Functionally, reversibly transfers an adenylyl group from ATP to 4'-phosphopantetheine, yielding dephospho-CoA (dPCoA) and pyrophosphate. The chain is Phosphopantetheine adenylyltransferase from Prochlorococcus marinus (strain MIT 9215).